A 142-amino-acid polypeptide reads, in one-letter code: Group IIE secretory phospholipase A2 (142 aa).

An N-terminal signal peptide occupies residues 1 to 19 (MKPPIALACLCLLVPLAGG). Positions 41, 43, 45, 47, and 49 each coordinate Ca(2+). 7 cysteine pairs are disulfide-bonded: Cys44/Cys135, Cys46/Cys62, Cys61/Cys115, Cys67/Cys142, Cys68/Cys108, Cys77/Cys101, and Cys95/Cys106. The active site involves His65. Asp66 provides a ligand contact to Ca(2+). Residue Asp109 is part of the active site. 2 residues coordinate Ca(2+): Tyr130 and Asn132.

The protein belongs to the phospholipase A2 family. Ca(2+) is required as a cofactor. In terms of tissue distribution, highly expressed in skin and uterus, and at lower levels in various other tissues. Expressed in hair follicles, specifically localized in companion cells of the outer root sheath and cuticular cells of the inner root sheath in hair follicles during anagen. Expressed in white and brown adipose tissue.

The protein localises to the secreted. The protein resides in the cytoplasm. The catalysed reaction is a 1,2-diacyl-sn-glycero-3-phosphoethanolamine + H2O = a 1-acyl-sn-glycero-3-phosphoethanolamine + a fatty acid + H(+). The enzyme catalyses 1-hexadecanoyl-2-(9Z-octadecenoyl)-sn-glycero-3-phosphoethanolamine + H2O = 1-hexadecanoyl-sn-glycero-3-phosphoethanolamine + (9Z)-octadecenoate + H(+). It catalyses the reaction 1-hexadecanoyl-2-(9Z,12Z-octadecadienoyl)-sn-glycero-3-phosphoethanolamine + H2O = 1-hexadecanoyl-sn-glycero-3-phosphoethanolamine + (9Z,12Z)-octadecadienoate + H(+). It carries out the reaction 1-hexadecanoyl-2-(5Z,8Z,11Z,14Z-eicosatetraenoyl)-sn-glycero-3-phosphoethanolamine + H2O = 1-hexadecanoyl-sn-glycero-3-phosphoethanolamine + (5Z,8Z,11Z,14Z)-eicosatetraenoate + H(+). The catalysed reaction is 1,2-dihexadecanoyl-sn-glycero-3-phospho-(1'-sn-glycerol) + H2O = 1-hexadecanoyl-sn-glycero-3-phospho-(1'-sn-glycerol) + hexadecanoate + H(+). The enzyme catalyses 1-hexadecanoyl-2-(9Z-octadecenoyl)-sn-glycero-3-phosphoglycerol + H2O = 1-hexadecanoyl-sn-glycero-3-phosphoglycerol + (9Z)-octadecenoate + H(+). It catalyses the reaction a 1,2-diacyl-sn-glycero-3-phosphocholine + H2O = a 1-acyl-sn-glycero-3-phosphocholine + a fatty acid + H(+). It carries out the reaction 1,2-dihexadecanoyl-sn-glycero-3-phosphocholine + H2O = 1-hexadecanoyl-sn-glycero-3-phosphocholine + hexadecanoate + H(+). The catalysed reaction is 1-hexadecanoyl-2-(9Z-octadecenoyl)-sn-glycero-3-phosphocholine + H2O = 1-hexadecanoyl-sn-glycero-3-phosphocholine + (9Z)-octadecenoate + H(+). The enzyme catalyses 1-hexadecanoyl-2-(9Z,12Z-octadecadienoyl)-sn-glycero-3-phosphocholine + H2O = (9Z,12Z)-octadecadienoate + 1-hexadecanoyl-sn-glycero-3-phosphocholine + H(+). It catalyses the reaction 1-hexadecanoyl-2-(4Z,7Z,10Z,13Z,16Z,19Z-docosahexaenoyl)-sn-glycero-3-phosphocholine + H2O = (4Z,7Z,10Z,13Z,16Z,19Z)-docosahexaenoate + 1-hexadecanoyl-sn-glycero-3-phosphocholine + H(+). In terms of biological role, secretory calcium-dependent phospholipase A2 that primarily targets extracellular phospholipids. Hydrolyzes the ester bond of the fatty acyl group attached at sn-2 position of phospholipids (phospholipase A2 activity), releasing various unsaturated fatty acids including oleoate, linoleoate, arachidonate, docosahexaenoate and lysophosphatidylethanolamines in preference to lysophosphatidylcholines. In response to high-fat diet, hydrolyzes minor lipoprotein phospholipids including phosphatidylserines, phosphatidylinositols and phosphatidylglycerols, altering lipoprotein composition and fat storage in adipose tissue and liver. May act in an autocrine and paracrine manner. Contributes to lipid remodeling of cellular membranes and generation of lipid mediators involved in pathogen clearance. Cleaves sn-2 fatty acyl chains of phosphatidylglycerols and phosphatidylethanolamines, which are major components of membrane phospholipids in bacteria. Acts as a hair follicle phospholipase A2. Selectively releases lysophosphatidylethanolamines (LPE) and various unsaturated fatty acids in skin to regulate hair follicle homeostasis. May regulate the inflammatory response by releasing arachidonate, a precursor of prostaglandins and leukotrienes. Upon allergen exposure, may participate in allergic inflammatory response by enhancing leukotriene C4 synthesis and degranulation in mast cells. The polypeptide is Group IIE secretory phospholipase A2 (Pla2g2e) (Mus musculus (Mouse)).